The sequence spans 299 residues: Oxygen-dependent coproporphyrinogen-III oxidase (299 aa).

Serine 92 is a binding site for substrate. Residues histidine 96 and histidine 106 each coordinate Mn(2+). Catalysis depends on histidine 106, which acts as the Proton donor. 108–110 (NVR) lines the substrate pocket. The Mn(2+) site is built by histidine 145 and histidine 175. Residues 240-275 (YVEFNLVWDRGTLFGLQTGGRTESILMSMPPLVRWE) are important for dimerization. Position 258–260 (258–260 (GGR)) interacts with substrate.

It belongs to the aerobic coproporphyrinogen-III oxidase family. As to quaternary structure, homodimer. It depends on Mn(2+) as a cofactor.

The protein resides in the cytoplasm. It carries out the reaction coproporphyrinogen III + O2 + 2 H(+) = protoporphyrinogen IX + 2 CO2 + 2 H2O. The protein operates within porphyrin-containing compound metabolism; protoporphyrin-IX biosynthesis; protoporphyrinogen-IX from coproporphyrinogen-III (O2 route): step 1/1. Functionally, involved in the heme biosynthesis. Catalyzes the aerobic oxidative decarboxylation of propionate groups of rings A and B of coproporphyrinogen-III to yield the vinyl groups in protoporphyrinogen-IX. The polypeptide is Oxygen-dependent coproporphyrinogen-III oxidase (Escherichia coli (strain SE11)).